Here is a 282-residue protein sequence, read N- to C-terminus: tRNA pseudouridine synthase B (282 aa).

D39 (nucleophile) is an active-site residue.

The protein belongs to the pseudouridine synthase TruB family. Type 1 subfamily.

It catalyses the reaction uridine(55) in tRNA = pseudouridine(55) in tRNA. Its function is as follows. Responsible for synthesis of pseudouridine from uracil-55 in the psi GC loop of transfer RNAs. In Borreliella burgdorferi (strain ATCC 35210 / DSM 4680 / CIP 102532 / B31) (Borrelia burgdorferi), this protein is tRNA pseudouridine synthase B.